The sequence spans 296 residues: 33 kDa chaperonin (296 aa).

Intrachain disulfides connect Cys233/Cys235 and Cys267/Cys270.

It belongs to the HSP33 family. Post-translationally, under oxidizing conditions two disulfide bonds are formed involving the reactive cysteines. Under reducing conditions zinc is bound to the reactive cysteines and the protein is inactive.

Its subcellular location is the cytoplasm. In terms of biological role, redox regulated molecular chaperone. Protects both thermally unfolding and oxidatively damaged proteins from irreversible aggregation. Plays an important role in the bacterial defense system toward oxidative stress. This is 33 kDa chaperonin from Actinobacillus pleuropneumoniae serotype 5b (strain L20).